Here is a 493-residue protein sequence, read N- to C-terminus: Glutamate--tRNA ligase (493 aa).

Residues 10 to 20 (PSPTGDPHVGT) carry the 'HIGH' region motif. The 'KMSKS' region motif lies at 251 to 255 (KLSKR). Lys-254 is an ATP binding site.

The protein belongs to the class-I aminoacyl-tRNA synthetase family. Glutamate--tRNA ligase type 1 subfamily. Monomer.

The protein localises to the cytoplasm. It catalyses the reaction tRNA(Glu) + L-glutamate + ATP = L-glutamyl-tRNA(Glu) + AMP + diphosphate. Catalyzes the attachment of glutamate to tRNA(Glu) in a two-step reaction: glutamate is first activated by ATP to form Glu-AMP and then transferred to the acceptor end of tRNA(Glu). The sequence is that of Glutamate--tRNA ligase from Pseudomonas entomophila (strain L48).